A 214-amino-acid polypeptide reads, in one-letter code: Adenylate kinase (214 aa).

10–15 (GAGKGT) provides a ligand contact to ATP. An NMP region spans residues 30–59 (STGDMLRAAVKAGTPLGLEAKKVMDAGQLV). AMP is bound by residues threonine 31, arginine 36, 57–59 (QLV), 85–88 (GFPR), and glutamine 92. The interval 122–159 (GRRVHPGSGRVYHVVFNPPKVEGKDDVTGEDLVIRPDD) is LID. ATP-binding positions include arginine 123 and 132 to 133 (VY). Residues arginine 156 and arginine 167 each contribute to the AMP site. Glutamine 200 lines the ATP pocket.

It belongs to the adenylate kinase family. Monomer.

It localises to the cytoplasm. The enzyme catalyses AMP + ATP = 2 ADP. Its pathway is purine metabolism; AMP biosynthesis via salvage pathway; AMP from ADP: step 1/1. In terms of biological role, catalyzes the reversible transfer of the terminal phosphate group between ATP and AMP. Plays an important role in cellular energy homeostasis and in adenine nucleotide metabolism. This is Adenylate kinase from Shewanella amazonensis (strain ATCC BAA-1098 / SB2B).